The following is a 715-amino-acid chain: L-type lectin-domain containing receptor kinase VIII.1 (715 aa).

Positions 1–21 (MSLFLSFFISILLCFFNGATT) are cleaved as a signal peptide. The segment at 22–247 (TQFDFSTLAI…IHSIEWWSFS (226 aa)) is legume-lectin like. At 22 to 317 (TQFDFSTLAI…SRFCKENPGT (296 aa)) the chain is on the extracellular side. N-linked (GlcNAc...) asparagine glycans are attached at residues Asn126 and Asn195. A disordered region spans residues 255-296 (GSGSGSPPPRANLMNPKANSVKSPPPLASQPSSSAIPISSNT). Over residues 283 to 296 (SQPSSSAIPISSNT) the composition is skewed to low complexity. The chain crosses the membrane as a helical span at residues 318–338 (IAGVVTAGAFFLALFAGALFW). Over 339–715 (VYSKKFKRVE…IIRSDDDHLV (377 aa)) the chain is Cytoplasmic. One can recognise a Protein kinase domain in the interval 376-676 (FNESRIIGHG…MSFSTSHLLL (301 aa)). Residues 382 to 390 (IGHGAFGVV) and Lys405 contribute to the ATP site. Catalysis depends on Asp500, which acts as the Proton acceptor.

The protein in the C-terminal section; belongs to the protein kinase superfamily. Ser/Thr protein kinase family. In the N-terminal section; belongs to the leguminous lectin family.

The protein resides in the cell membrane. The catalysed reaction is L-seryl-[protein] + ATP = O-phospho-L-seryl-[protein] + ADP + H(+). It catalyses the reaction L-threonyl-[protein] + ATP = O-phospho-L-threonyl-[protein] + ADP + H(+). This chain is L-type lectin-domain containing receptor kinase VIII.1 (LECRK81), found in Arabidopsis thaliana (Mouse-ear cress).